A 190-amino-acid polypeptide reads, in one-letter code: dTTP/UTP pyrophosphatase (190 aa).

D68 functions as the Proton acceptor in the catalytic mechanism.

This sequence belongs to the Maf family. YhdE subfamily. Requires a divalent metal cation as cofactor.

It localises to the cytoplasm. It catalyses the reaction dTTP + H2O = dTMP + diphosphate + H(+). The catalysed reaction is UTP + H2O = UMP + diphosphate + H(+). Functionally, nucleoside triphosphate pyrophosphatase that hydrolyzes dTTP and UTP. May have a dual role in cell division arrest and in preventing the incorporation of modified nucleotides into cellular nucleic acids. In Pyrococcus furiosus (strain ATCC 43587 / DSM 3638 / JCM 8422 / Vc1), this protein is dTTP/UTP pyrophosphatase.